The following is a 975-amino-acid chain: Ubiquitin C-terminal hydrolase 15 (975 aa).

Residues C88, C91, C99, C102, C108, C112, H121, and C125 each coordinate Zn(2+). The MYND-type zinc-finger motif lies at 88–125; the sequence is CATCHGPAKTRCSRCKSVRYCSGKCQIIHWRQGHKQTC. The disordered stretch occupies residues 301–378; sequence EGPYASAAES…STKTAVSTNS (78 aa). Residues 309–322 are compositionally biased toward polar residues; the sequence is ESLQRSNSSGNVTG. Basic and acidic residues predominate over residues 354–369; the sequence is YDGHEKNPHNKNEQRS. Residues 441 to 747 enclose the USP domain; the sequence is RGLFNCGNSC…GAYMLFYMRS (307 aa). The active-site Nucleophile is C450. The Proton acceptor role is filled by H706. The segment at 764–783 is disordered; it reads PTCSKRHSSKSSKGSKQDLN.

Belongs to the peptidase C19 family. Highly expressed in young panicles. Expressed in roots, leaf blades, leaf sheaths and stems. Expressed at low levels in brown grains.

Its subcellular location is the cytoplasm. The protein localises to the nucleus. It carries out the reaction Thiol-dependent hydrolysis of ester, thioester, amide, peptide and isopeptide bonds formed by the C-terminal Gly of ubiquitin (a 76-residue protein attached to proteins as an intracellular targeting signal).. Its function is as follows. Recognizes and hydrolyzes the peptide bond at the C-terminal Gly of ubiquitin. Involved in the processing of poly-ubiquitin precursors as well as that of ubiquitinated proteins. Involved in the regulation of grain size. Acts as positive regulator of grain width and size by influencing cell proliferation. Functions partially antagonistically with GW2 in the regulation of grain width. Possesses deubiquitinating enzyme activity in vitro. This Oryza sativa subsp. japonica (Rice) protein is Ubiquitin C-terminal hydrolase 15.